Consider the following 224-residue polypeptide: ATP phosphoribosyltransferase (224 aa).

This sequence belongs to the ATP phosphoribosyltransferase family. Short subfamily. In terms of assembly, heteromultimer composed of HisG and HisZ subunits.

It localises to the cytoplasm. It carries out the reaction 1-(5-phospho-beta-D-ribosyl)-ATP + diphosphate = 5-phospho-alpha-D-ribose 1-diphosphate + ATP. It functions in the pathway amino-acid biosynthesis; L-histidine biosynthesis; L-histidine from 5-phospho-alpha-D-ribose 1-diphosphate: step 1/9. Catalyzes the condensation of ATP and 5-phosphoribose 1-diphosphate to form N'-(5'-phosphoribosyl)-ATP (PR-ATP). Has a crucial role in the pathway because the rate of histidine biosynthesis seems to be controlled primarily by regulation of HisG enzymatic activity. In Cupriavidus metallidurans (strain ATCC 43123 / DSM 2839 / NBRC 102507 / CH34) (Ralstonia metallidurans), this protein is ATP phosphoribosyltransferase.